Consider the following 706-residue polypeptide: Ribosomal RNA large subunit methyltransferase K/L (706 aa).

Residues 43-154 form the THUMP domain; that stretch reads LMYQSLLWSR…RDMASVALDL (112 aa).

The protein belongs to the methyltransferase superfamily. RlmKL family.

Its subcellular location is the cytoplasm. It carries out the reaction guanosine(2445) in 23S rRNA + S-adenosyl-L-methionine = N(2)-methylguanosine(2445) in 23S rRNA + S-adenosyl-L-homocysteine + H(+). The catalysed reaction is guanosine(2069) in 23S rRNA + S-adenosyl-L-methionine = N(2)-methylguanosine(2069) in 23S rRNA + S-adenosyl-L-homocysteine + H(+). Its function is as follows. Specifically methylates the guanine in position 2445 (m2G2445) and the guanine in position 2069 (m7G2069) of 23S rRNA. The protein is Ribosomal RNA large subunit methyltransferase K/L of Yersinia pseudotuberculosis serotype O:1b (strain IP 31758).